The primary structure comprises 312 residues: uncharacterized protein (312 aa).

This is an uncharacterized protein from Escherichia coli (strain K12).